The primary structure comprises 231 residues: Putative carboxymethylenebutenolidase (231 aa).

Active-site residues include Cys118, Asp167, and His199.

The protein belongs to the dienelactone hydrolase family.

It carries out the reaction 2-(5-oxo-2,5-dihydrofuran-2-ylidene)acetate + H2O = 4-oxohex-2-enedioate + H(+). In Aquifex aeolicus (strain VF5), this protein is Putative carboxymethylenebutenolidase.